Reading from the N-terminus, the 148-residue chain is Large ribosomal subunit protein uL15 (148 aa).

Residues 1–61 form a disordered region; sequence MELNELRPAV…GGQMPMQRRL (61 aa). The span at 30 to 39 shows a compositional bias: basic residues; that stretch reads TATKGHKGQK.

Belongs to the universal ribosomal protein uL15 family. Part of the 50S ribosomal subunit.

Binds to the 23S rRNA. This is Large ribosomal subunit protein uL15 from Geobacter sulfurreducens (strain ATCC 51573 / DSM 12127 / PCA).